The sequence spans 1404 residues: G8 domain-containing protein DDB_G0286897 (1404 aa).

The first 20 residues, 1-20 (MNYFKYFIFVVFLFFTIVKC), serve as a signal peptide directing secretion. Helical transmembrane passes span 97–117 (LVGFNWISMLIASLLSIGLFA) and 128–148 (IIILIIGFICLSLMINGIQSI). N-linked (GlcNAc...) asparagine glycans are attached at residues N352, N365, N413, N481, N639, N838, N979, N1003, N1017, N1253, and N1334. In terms of domain architecture, G8 spans 553–679 (STWASGFVPL…YHNTWTKLST (127 aa)).

This sequence belongs to the comF family.

The protein resides in the membrane. This is G8 domain-containing protein DDB_G0286897 from Dictyostelium discoideum (Social amoeba).